A 184-amino-acid chain; its full sequence is Photosystem I assembly protein Ycf3 (184 aa).

TPR repeat units lie at residues 31 to 64, 68 to 101, and 131 to 164; these read AFAY…DEDQ, SYTL…NSNL, and MEIS…APDN.

It belongs to the Ycf3 family.

The protein localises to the plastid. It is found in the chloroplast thylakoid membrane. Its function is as follows. Essential for the assembly of the photosystem I (PSI) complex. May act as a chaperone-like factor to guide the assembly of the PSI subunits. The sequence is that of Photosystem I assembly protein Ycf3 from Thalassiosira pseudonana (Marine diatom).